The primary structure comprises 485 residues: UDP-N-acetylmuramoyl-L-alanyl-D-glutamate--2,6-diaminopimelate ligase (485 aa).

Serine 32 contacts UDP-N-acetyl-alpha-D-muramoyl-L-alanyl-D-glutamate. Glycine 111–threonine 117 provides a ligand contact to ATP. Residues threonine 153–threonine 154, serine 180, and arginine 188 each bind UDP-N-acetyl-alpha-D-muramoyl-L-alanyl-D-glutamate. Lysine 220 carries the post-translational modification N6-carboxylysine. Meso-2,6-diaminopimelate contacts are provided by residues arginine 382, aspartate 405–arginine 408, glycine 455, and glutamate 459. Residues aspartate 405–arginine 408 carry the Meso-diaminopimelate recognition motif motif.

It belongs to the MurCDEF family. MurE subfamily. Mg(2+) is required as a cofactor. Carboxylation is probably crucial for Mg(2+) binding and, consequently, for the gamma-phosphate positioning of ATP.

The protein resides in the cytoplasm. It carries out the reaction UDP-N-acetyl-alpha-D-muramoyl-L-alanyl-D-glutamate + meso-2,6-diaminopimelate + ATP = UDP-N-acetyl-alpha-D-muramoyl-L-alanyl-gamma-D-glutamyl-meso-2,6-diaminopimelate + ADP + phosphate + H(+). It functions in the pathway cell wall biogenesis; peptidoglycan biosynthesis. Functionally, catalyzes the addition of meso-diaminopimelic acid to the nucleotide precursor UDP-N-acetylmuramoyl-L-alanyl-D-glutamate (UMAG) in the biosynthesis of bacterial cell-wall peptidoglycan. This is UDP-N-acetylmuramoyl-L-alanyl-D-glutamate--2,6-diaminopimelate ligase from Chlamydia felis (strain Fe/C-56) (Chlamydophila felis).